The chain runs to 785 residues: Conidiophore development regulator abaA (785 aa).

The tract at residues 1–22 (MAEWQTECMLPPTQPGFEGVGP) is disordered. The TEA DNA-binding region spans 130–204 (GKDGEPVWSD…QVLDSFLKGD (75 aa)). The tract at residues 213–232 (EQPADRSNGQPPSAGPRWRN) is disordered.

This sequence belongs to the TEC1 family.

The protein resides in the nucleus. Its function is as follows. BrlA, abaA and wetA are pivotal regulators of conidiophore development and conidium maturation. They act individually and together to regulate their own expression and that of numerous other sporulation-specific genes. Binds to the sequence 5'-CATTCY-3', where Y is a pyrimidine, making both major- and minor-groove contacts. Controls expression of wetA. The chain is Conidiophore development regulator abaA from Aspergillus oryzae (strain ATCC 42149 / RIB 40) (Yellow koji mold).